The sequence spans 169 residues: Large ribosomal subunit protein uL10 (169 aa).

It belongs to the universal ribosomal protein uL10 family. Part of the ribosomal stalk of the 50S ribosomal subunit. The N-terminus interacts with L11 and the large rRNA to form the base of the stalk. The C-terminus forms an elongated spine to which L12 dimers bind in a sequential fashion forming a multimeric L10(L12)X complex.

Its function is as follows. Forms part of the ribosomal stalk, playing a central role in the interaction of the ribosome with GTP-bound translation factors. This is Large ribosomal subunit protein uL10 from Rickettsia typhi (strain ATCC VR-144 / Wilmington).